Reading from the N-terminus, the 1033-residue chain is SIT4-associating protein SAP190 (1033 aa).

4 disordered regions span residues 32-82, 147-213, 768-813, and 828-1033; these read DQDD…TTES, PEII…QVET, FGND…HDSG, and ENEE…KEAF. The span at 158-170 shows a compositional bias: basic and acidic residues; it reads ILIERDRKDKKED. The span at 171–182 shows a compositional bias: acidic residues; sequence AEEGGDSEETTN. Positions 183–195 are enriched in basic and acidic residues; that stretch reads DSDHDSGDERSVD. Serine 774 bears the Phosphoserine mark. Acidic residues-rich tracts occupy residues 784 to 793 and 828 to 838; these read SEDIIGDTEG and ENEEDYAEYSD. 3 positions are modified to phosphoserine: serine 857, serine 862, and serine 892. The segment covering 858 to 879 has biased composition (basic and acidic residues); it reads DDGKSKSAESEFTDKISEHRDG. Residues 909-924 are compositionally biased toward polar residues; the sequence is SRSQPSDPKLQDQNIF. Residues 932 to 944 show a composition bias toward acidic residues; that stretch reads GVGDDDDYMDPND. Phosphothreonine is present on threonine 990. Serine 991 carries the phosphoserine modification. A compositionally biased stretch (acidic residues) spans 1000–1018; sequence ISSDEEDSEDEDEENDMGN.

The protein belongs to the SAPS family. Associates with the SIT4 protein phosphatase catalytic subunit in a cell-cycle-dependent manner. In terms of processing, hyperphosphorylated in the absence of SIT4.

It is found in the cytoplasm. Its function is as follows. Positive regulator of protein phosphatase SIT4. Involved in the general amino acid control (GAAC) response regulated by TOR. Involved in the dephosphorylation of the elongator complex subunit IKI3. This is SIT4-associating protein SAP190 (SAP190) from Saccharomyces cerevisiae (strain Lalvin EC1118 / Prise de mousse) (Baker's yeast).